The following is a 450-amino-acid chain: Biotin carboxylase 1 (450 aa).

A Biotin carboxylation domain is found at 1–447 (MIKKLLIANR…NTKFLETYDV (447 aa)). ATP is bound by residues K116, K158, 164–165 (GG), 200–203 (EKYI), and H208. One can recognise an ATP-grasp domain in the interval 120 to 318 (RETMKQAGVP…LIKEQIKVAS (199 aa)). A hydrogencarbonate-binding site is contributed by K237. ATP contacts are provided by E275 and E289. Mg(2+)-binding residues include E275, E289, and N291. Mn(2+) is bound by residues E275, E289, and N291. 3 residues coordinate hydrogencarbonate: R293, V296, and R339. R293 is an active-site residue. Residue R339 participates in biotin binding.

In terms of assembly, acetyl-CoA carboxylase is a heterohexamer of biotin carboxyl carrier protein, biotin carboxylase and the two subunits of carboxyl transferase in a 2:2 complex. It depends on Mg(2+) as a cofactor. Requires Mn(2+) as cofactor.

It carries out the reaction N(6)-biotinyl-L-lysyl-[protein] + hydrogencarbonate + ATP = N(6)-carboxybiotinyl-L-lysyl-[protein] + ADP + phosphate + H(+). Its pathway is lipid metabolism; malonyl-CoA biosynthesis; malonyl-CoA from acetyl-CoA: step 1/1. Its function is as follows. This protein is a component of the acetyl coenzyme A carboxylase complex; first, biotin carboxylase catalyzes the carboxylation of the carrier protein and then the transcarboxylase transfers the carboxyl group to form malonyl-CoA. This chain is Biotin carboxylase 1 (accC1), found in Bacillus subtilis (strain 168).